A 2184-amino-acid chain; its full sequence is Genome polyprotein (2184 aa).

A lipid anchor (N-myristoyl glycine; by host) is attached at Gly2. At 2 to 1494 the chain is on the cytoplasmic side; it reads GAQVSTQKTG…HVSRAFICLQ (1493 aa). The segment at 566–582 is amphipathic alpha-helix; sequence FYQSPVEGAIERAIARV. Residues His871 and Asp889 each act as for protease 2A activity in the active site. Positions 906 and 908 each coordinate Zn(2+). Cys960 (for protease 2A activity) is an active-site residue. Cys966 and His968 together coordinate Zn(2+). Residues 1100 to 1172 form a membrane-binding region; sequence SNGWLKKFTE…EQSAPSQSDQ (73 aa). Residues 1100-1238 form an oligomerization region; that stretch reads SNGWLKKFTE…SPGAGKSVAT (139 aa). The interval 1121–1125 is RNA-binding; sequence AIKIQ. One can recognise an SF3 helicase domain in the interval 1204-1360; that stretch reads EKKMSNYIQF…SMYSQNGKIN (157 aa). Zn(2+) is bound by residues Cys1368, Cys1380, and Cys1385. The C4-type; degenerate zinc-finger motif lies at 1368–1385; that stretch reads CDEECCPVNFKKCCPLVC. The RNA-binding stretch occupies residues 1412-1419; sequence EYNHRHSV. An oligomerization region spans residues 1423–1428; sequence LEALFQ. The stretch at 1495–1510 is an intramembrane region; the sequence is ALTTFVSVAGIIYIIY. At 1511–2184 the chain is on the cytoplasmic side; it reads KLFAGFQGAY…TLRRKWLDSF (674 aa). Tyr1520 carries the post-translational modification O-(5'-phospho-RNA)-tyrosine. In terms of domain architecture, Peptidase C3 spans 1540-1718; the sequence is GPAFEFAVAM…FSAALLKHYF (179 aa). Active-site for protease 3C activity residues include His1579, Glu1610, and Cys1686. One can recognise a RdRp catalytic domain in the interval 1949–2065; that stretch reads GHLIAFDYSG…SYPWPIDASL (117 aa). Mg(2+) is bound by residues Asp1955 and Asp2051.

Belongs to the picornaviruses polyprotein family. In terms of assembly, interacts with capsid protein VP1 and capsid protein VP3 to form heterotrimeric protomers. As to quaternary structure, interacts with capsid protein VP0, and capsid protein VP3 to form heterotrimeric protomers. Five protomers subsequently associate to form pentamers which serve as building blocks for the capsid. Interacts with capsid protein VP2, capsid protein VP3 and capsid protein VP4 following cleavage of capsid protein VP0. Interacts with host CXADR. Interacts with capsid protein VP1 and capsid protein VP3 in the mature capsid. In terms of assembly, interacts with capsid protein VP0 and capsid protein VP1 to form heterotrimeric protomers. Five protomers subsequently associate to form pentamers which serve as building blocks for the capsid. Interacts with capsid protein VP4 in the mature capsid. Interacts with protein 2C; this interaction may be important for virion morphogenesis. As to quaternary structure, interacts with capsid protein VP1 and capsid protein VP3. Homodimer. In terms of assembly, homohexamer; forms a hexameric ring structure with 6-fold symmetry characteristic of AAA+ ATPases. Interacts (via N-terminus) with host RTN3 (via reticulon domain); this interaction is important for viral replication. Interacts with capsid protein VP3; this interaction may be important for virion morphogenesis. As to quaternary structure, interacts with protein 3CD. Homodimer. Interacts with host GBF1. Interacts (via GOLD domain) with host ACBD3 (via GOLD domain); this interaction allows the formation of a viral protein 3A/ACBD3 heterotetramer with a 2:2 stoichiometry, which will stimulate the recruitment of host PI4KB in order to synthesize PI4P at the viral RNA replication sites. In terms of assembly, interacts with RNA-directed RNA polymerase. As to quaternary structure, interacts with protein 3AB and with RNA-directed RNA polymerase. Interacts with Viral protein genome-linked and with protein 3CD. Mg(2+) serves as cofactor. Specific enzymatic cleavages in vivo by the viral proteases yield processing intermediates and the mature proteins. In terms of processing, myristoylation is required for the formation of pentamers during virus assembly. Further assembly of 12 pentamers and a molecule of genomic RNA generates the provirion. Post-translationally, during virion maturation, immature virions are rendered infectious following cleavage of VP0 into VP4 and VP2. This maturation seems to be an autocatalytic event triggered by the presence of RNA in the capsid and it is followed by a conformational change infectious virion. Myristoylation is required during RNA encapsidation and formation of the mature virus particle. In terms of processing, VPg is uridylylated by the polymerase into VPg-pUpU. This acts as a nucleotide-peptide primer for the genomic RNA replication.

The protein resides in the virion. The protein localises to the host cytoplasm. It localises to the host cytoplasmic vesicle membrane. Its subcellular location is the host nucleus. It carries out the reaction a ribonucleoside 5'-triphosphate + H2O = a ribonucleoside 5'-diphosphate + phosphate + H(+). It catalyses the reaction Selective cleavage of Tyr-|-Gly bond in the picornavirus polyprotein.. The enzyme catalyses RNA(n) + a ribonucleoside 5'-triphosphate = RNA(n+1) + diphosphate. The catalysed reaction is Selective cleavage of Gln-|-Gly bond in the poliovirus polyprotein. In other picornavirus reactions Glu may be substituted for Gln, and Ser or Thr for Gly.. Replication or transcription is subject to high level of random mutations by the nucleotide analog ribavirin. Its function is as follows. Forms an icosahedral capsid of pseudo T=3 symmetry with capsid proteins VP2 and VP3. The capsid is 300 Angstroms in diameter, composed of 60 copies of each capsid protein and enclosing the viral positive strand RNA genome. Capsid protein VP1 mainly forms the vertices of the capsid. Capsid protein VP1 interacts with host CXADR to provide virion attachment to target host cells. This attachment induces virion internalization. Tyrosine kinases are probably involved in the entry process. After binding to its receptor, the capsid undergoes conformational changes. Capsid protein VP1 N-terminus (that contains an amphipathic alpha-helix) and capsid protein VP4 are externalized. Together, they shape a pore in the host membrane through which viral genome is translocated to host cell cytoplasm. In terms of biological role, forms an icosahedral capsid of pseudo T=3 symmetry with capsid proteins VP2 and VP3. The capsid is 300 Angstroms in diameter, composed of 60 copies of each capsid protein and enclosing the viral positive strand RNA genome. Functionally, lies on the inner surface of the capsid shell. After binding to the host receptor, the capsid undergoes conformational changes. Capsid protein VP4 is released, Capsid protein VP1 N-terminus is externalized, and together, they shape a pore in the host membrane through which the viral genome is translocated into the host cell cytoplasm. Component of immature procapsids, which is cleaved into capsid proteins VP4 and VP2 after maturation. Allows the capsid to remain inactive before the maturation step. Its function is as follows. Cysteine protease that cleaves viral polyprotein and specific host proteins. It is responsible for the autocatalytic cleavage between the P1 and P2 regions, which is the first cleavage occurring in the polyprotein. Also cleaves the host translation initiation factor EIF4G1, in order to shut down the capped cellular mRNA translation. Inhibits the host nucleus-cytoplasm protein and RNA trafficking by cleaving host members of the nuclear pores. Counteracts stress granule formation probably by antagonizing its assembly or promoting its dissassembly. Cleaves and inhibits host IFIH1/MDA5, thereby inhibiting the type-I IFN production and the establishment of the antiviral state. Cleaves and inhibits host MAVS, thereby inhibiting the type-I IFN production and the establishment of the antiviral state. In terms of biological role, plays an essential role in the virus replication cycle by acting as a viroporin. Creates a pore in the host endoplasmic reticulum and as a consequence releases Ca2+ in the cytoplasm of infected cell. In turn, high levels of cytoplasmic calcium may trigger membrane trafficking and transport of viral ER-associated proteins to viroplasms, sites of viral genome replication. Functionally, induces and associates with structural rearrangements of intracellular membranes. Displays RNA-binding, nucleotide binding and NTPase activities. May play a role in virion morphogenesis and viral RNA encapsidation by interacting with the capsid protein VP3. Localizes the viral replication complex to the surface of membranous vesicles. Together with protein 3CD binds the Cis-Active RNA Element (CRE) which is involved in RNA synthesis initiation. Acts as a cofactor to stimulate the activity of 3D polymerase, maybe through a nucleid acid chaperone activity. Its function is as follows. Localizes the viral replication complex to the surface of membranous vesicles. It inhibits host cell endoplasmic reticulum-to-Golgi apparatus transport and causes the disassembly of the Golgi complex, possibly through GBF1 interaction. This would result in depletion of MHC, trail receptors and IFN receptors at the host cell surface. Plays an essential role in viral RNA replication by recruiting ACBD3 and PI4KB at the viral replication sites, thereby allowing the formation of the rearranged membranous structures where viral replication takes place. In terms of biological role, acts as a primer for viral RNA replication and remains covalently bound to viral genomic RNA. VPg is uridylylated prior to priming replication into VPg-pUpU. The oriI viral genomic sequence may act as a template for this. The VPg-pUpU is then used as primer on the genomic RNA poly(A) by the RNA-dependent RNA polymerase to replicate the viral genome. During genome replication, the VPg-RNA linkage is removed by the host TDP2, thereby accelerating replication. During the late stage of the replication cycle, host TDP2 is excluded from sites of viral RNA synthesis and encapsidation, allowing for the generation of progeny virions. Functionally, involved in the viral replication complex and viral polypeptide maturation. It exhibits protease activity with a specificity and catalytic efficiency that is different from protease 3C. Protein 3CD lacks polymerase activity. Protein 3CD binds to the 5'UTR of the viral genome. Replicates the viral genomic RNA on the surface of intracellular membranes. May form linear arrays of subunits that propagate along a strong head-to-tail interaction called interface-I. Covalently attaches UMP to a tyrosine of VPg, which is used to prime RNA synthesis. The positive stranded RNA genome is first replicated at virus induced membranous vesicles, creating a dsRNA genomic replication form. This dsRNA is then used as template to synthesize positive stranded RNA genomes. ss(+)RNA genomes are either translated, replicated or encapsidated. Its function is as follows. Major viral protease that mediates proteolytic processing of the polyprotein. Cleaves host EIF5B, contributing to host translation shutoff. Also cleaves host PABPC1, contributing to host translation shutoff. Cleaves host NLRP1, triggers host N-glycine-mediated degradation of the autoinhibitory NLRP1 N-terminal fragment. In Coxsackievirus B6 (strain Schmitt), this protein is Genome polyprotein.